We begin with the raw amino-acid sequence, 109 residues long: Thiosulfate sulfurtransferase GlpE (109 aa).

The 89-residue stretch at 16 to 104 (REQGAVVVDV…WRTTFPSETA (89 aa)) folds into the Rhodanese domain. The active-site Cysteine persulfide intermediate is C64.

This sequence belongs to the GlpE family.

It localises to the cytoplasm. The catalysed reaction is thiosulfate + hydrogen cyanide = thiocyanate + sulfite + 2 H(+). It catalyses the reaction thiosulfate + [thioredoxin]-dithiol = [thioredoxin]-disulfide + hydrogen sulfide + sulfite + 2 H(+). Its function is as follows. Transferase that catalyzes the transfer of sulfur from thiosulfate to thiophilic acceptors such as cyanide or dithiols. May function in a CysM-independent thiosulfate assimilation pathway by catalyzing the conversion of thiosulfate to sulfite, which can then be used for L-cysteine biosynthesis. The chain is Thiosulfate sulfurtransferase GlpE from Pseudomonas fluorescens (strain Pf0-1).